The primary structure comprises 395 residues: ATP phosphoribosyltransferase regulatory subunit (395 aa).

This sequence belongs to the class-II aminoacyl-tRNA synthetase family. HisZ subfamily. In terms of assembly, heteromultimer composed of HisG and HisZ subunits.

It localises to the cytoplasm. It participates in amino-acid biosynthesis; L-histidine biosynthesis; L-histidine from 5-phospho-alpha-D-ribose 1-diphosphate: step 1/9. Required for the first step of histidine biosynthesis. May allow the feedback regulation of ATP phosphoribosyltransferase activity by histidine. The chain is ATP phosphoribosyltransferase regulatory subunit from Pseudomonas fluorescens (strain ATCC BAA-477 / NRRL B-23932 / Pf-5).